The sequence spans 271 residues: 3-methyl-2-oxobutanoate hydroxymethyltransferase (271 aa).

Mg(2+) is bound by residues aspartate 51 and aspartate 90. 3-methyl-2-oxobutanoate contacts are provided by residues aspartate 51–serine 52, aspartate 90, and lysine 119. Glutamate 121 is a binding site for Mg(2+). Glutamate 188 functions as the Proton acceptor in the catalytic mechanism.

Belongs to the PanB family. As to quaternary structure, homodecamer; pentamer of dimers. Requires Mg(2+) as cofactor.

It localises to the cytoplasm. The catalysed reaction is 3-methyl-2-oxobutanoate + (6R)-5,10-methylene-5,6,7,8-tetrahydrofolate + H2O = 2-dehydropantoate + (6S)-5,6,7,8-tetrahydrofolate. The protein operates within cofactor biosynthesis; (R)-pantothenate biosynthesis; (R)-pantoate from 3-methyl-2-oxobutanoate: step 1/2. Its function is as follows. Catalyzes the reversible reaction in which hydroxymethyl group from 5,10-methylenetetrahydrofolate is transferred onto alpha-ketoisovalerate to form ketopantoate. The chain is 3-methyl-2-oxobutanoate hydroxymethyltransferase from Azoarcus sp. (strain BH72).